A 194-amino-acid polypeptide reads, in one-letter code: GTP cyclohydrolase 1 (194 aa).

Zn(2+)-binding residues include Cys83, His86, and Cys155.

The protein belongs to the GTP cyclohydrolase I family. As to quaternary structure, homomer.

The catalysed reaction is GTP + H2O = 7,8-dihydroneopterin 3'-triphosphate + formate + H(+). It participates in cofactor biosynthesis; 7,8-dihydroneopterin triphosphate biosynthesis; 7,8-dihydroneopterin triphosphate from GTP: step 1/1. The sequence is that of GTP cyclohydrolase 1 from Streptococcus pyogenes serotype M49 (strain NZ131).